A 375-amino-acid chain; its full sequence is Arabinose metabolism transcriptional repressor (375 aa).

The 70-residue stretch at 1-70 (METKYNFVKQ…QGAGTFCADR (70 aa)) folds into the HTH gntR-type domain. Positions 30 to 49 (ENELMKEYNVSRHTVRKAID) form a DNA-binding region, H-T-H motif.

The protein localises to the cytoplasm. Functionally, transcriptional repressor of the arabinose utilization genes. The sequence is that of Arabinose metabolism transcriptional repressor (araR) from Halalkalibacterium halodurans (strain ATCC BAA-125 / DSM 18197 / FERM 7344 / JCM 9153 / C-125) (Bacillus halodurans).